The sequence spans 105 residues: Malonate decarboxylase acyl carrier protein (105 aa).

An O-(phosphoribosyl dephospho-coenzyme A)serine modification is found at serine 28.

Belongs to the MdcC family. In terms of processing, covalently binds the prosthetic group of malonate decarboxylase.

Its subcellular location is the cytoplasm. Functionally, subunit of malonate decarboxylase, it is an acyl carrier protein to which acetyl and malonyl thioester residues are bound via a 2'-(5''-phosphoribosyl)-3'-dephospho-CoA prosthetic group and turn over during the catalytic mechanism. This is Malonate decarboxylase acyl carrier protein from Xanthomonas axonopodis pv. citri (strain 306).